Reading from the N-terminus, the 473-residue chain is MKSTVEKLSPTRVRINVEVPFTELEPDIDRAFKQLAKQIRLPGFRPGKAPRKLLEARVGRGAVLEQVVNDALPARYSEAVTAESLQPIGQPEIEVTKLEDNEELVFTAEVDVRPDIDLPDLGALKITVDPISVTDEDVDAEIEALQKRFGTLTGVDRAAEDGDFVSIDLSATVDGKDVPEANTEGLSHEVGSGQLIEGLDEAIIGLKADESKVFTTTLVAGEHAGQEAEVTVTVKSIKVRELPEVDDDFAQLASEFDTVEELRADLKEKISRFKRVQQAEAIRDKAIEVLLEQTEIPVPEAVVQAQVDDTLHNAIHGLDHDEDKFAESLKEQGSSREEFDADNRANAEKAIKTQLLMDSIADKLEIQVGQNDLTERLVLMSRQYGLEPQQLLQMLQQNNQLPAMFADVRRGLTVAAVVHGATVTDTDGAEIDTAEFFGPSGEQAEAEQDEAAPAEDATEETDADSDEAADDSK.

Residues 162-243 (GDFVSIDLSA…VKSIKVRELP (82 aa)) enclose the PPIase FKBP-type domain. Residues 433–473 (TAEFFGPSGEQAEAEQDEAAPAEDATEETDADSDEAADDSK) are disordered. Positions 444–473 (AEAEQDEAAPAEDATEETDADSDEAADDSK) are enriched in acidic residues.

The protein belongs to the FKBP-type PPIase family. Tig subfamily.

The protein localises to the cytoplasm. The enzyme catalyses [protein]-peptidylproline (omega=180) = [protein]-peptidylproline (omega=0). Its function is as follows. Involved in protein export. Acts as a chaperone by maintaining the newly synthesized protein in an open conformation. Functions as a peptidyl-prolyl cis-trans isomerase. This chain is Trigger factor, found in Mycolicibacterium vanbaalenii (strain DSM 7251 / JCM 13017 / BCRC 16820 / KCTC 9966 / NRRL B-24157 / PYR-1) (Mycobacterium vanbaalenii).